The sequence spans 359 residues: Tropomodulin-1 (359 aa).

A disordered region spans residues 36 to 61; that stretch reads ELDPDNALLPAGLRQKDQTTKAPTGP. The interval 39–138 is tropomyosin-binding; sequence PDNALLPAGL…CDIAAILGMH (100 aa).

This sequence belongs to the tropomodulin family. Binds to the N-terminus of tropomyosin and to actin. Interacts with FLII. In terms of tissue distribution, highly expressed in the erythrocyte, heart and skeletal muscle.

It localises to the cytoplasm. It is found in the cytoskeleton. Blocks the elongation and depolymerization of the actin filaments at the pointed end. The Tmod/TM complex contributes to the formation of the short actin protofilament, which in turn defines the geometry of the membrane skeleton. May play an important role in regulating the organization of actin filaments by preferentially binding to a specific tropomyosin isoform at its N-terminus. The chain is Tropomodulin-1 (TMOD1) from Homo sapiens (Human).